Reading from the N-terminus, the 81-residue chain is Small ribosomal subunit protein bS18 (81 aa).

It belongs to the bacterial ribosomal protein bS18 family. Part of the 30S ribosomal subunit. Forms a tight heterodimer with protein bS6.

Its function is as follows. Binds as a heterodimer with protein bS6 to the central domain of the 16S rRNA, where it helps stabilize the platform of the 30S subunit. The protein is Small ribosomal subunit protein bS18 of Lactococcus lactis subsp. cremoris (strain MG1363).